The following is a 393-amino-acid chain: MTDVVIVSAARTAVGKFGGSLAKIPAPELGAVVIKAALERAGVKPEQVSEVIMGQVLTAGSGQNPARQAAIKAGLPAMVPAMTINKVCGSGLKAVMLAANAIMAGDAEIVVAGGQENMSAAPHVLPGSRDGFRMGDAKLVDTMIVDGLWDVYNQYHMGITAENVAKEYGITREAQDEFAVGSQNKAEAAQKAGKFDEEIVPVLIPQRKGDPVAFKTDEFVRQGATLDSMSGLKPAFDKAGTVTAANASGLNDGAAAVVVMSAAKAKELGLTPLATIKSYANAGVDPKVMGMGPVPASKRALSRAEWTPQDLDLMEINEAFAAQALAVHQQMGWDTSKVNVNGGAIAIGHPIGASGCRILVTLLHEMKRRDAKKGLASLCIGGGMGVALAVERK.

The active-site Acyl-thioester intermediate is the Cys88. Active-site proton acceptor residues include His349 and Cys379.

Belongs to the thiolase-like superfamily. Thiolase family. Homotetramer.

It localises to the cytoplasm. It catalyses the reaction 2 acetyl-CoA = acetoacetyl-CoA + CoA. Its pathway is biopolymer metabolism; poly-(R)-3-hydroxybutanoate biosynthesis. The condensation reaction is inhibited by free CoA. The cleavage reaction is characterized by substrate inhibition by acetoacetyl-CoA, which is partially relieved by free CoA. Functionally, catalyzes the condensation of two acetyl-coA units to form acetoacetyl-CoA. Is involved in the biosynthesis of polyhydroxybutyrate (PHB), which is accumulated as an intracellular energy reserve material when cells grow under conditions of nutrient limitation. Also catalyzes the reverse reaction, i.e. the cleavage of acetoacetyl-CoA, and is therefore also involved in the reutilization of PHB. The chain is Acetyl-CoA acetyltransferase from Cupriavidus necator (strain ATCC 17699 / DSM 428 / KCTC 22496 / NCIMB 10442 / H16 / Stanier 337) (Ralstonia eutropha).